Reading from the N-terminus, the 241-residue chain is Endothelial protein C receptor (241 aa).

Residues 1–17 (MLTTLLPLLPLLLPGWA) form the signal peptide. Topologically, residues 18 to 212 (LCSQEASDGP…GSQTGRSYTS (195 aa)) are extracellular. N-linked (GlcNAc...) asparagine glycosylation is found at asparagine 49, asparagine 66, asparagine 138, and asparagine 174. Cystine bridges form between cysteine 120/cysteine 188 and cysteine 221/cysteine 234. The helical transmembrane segment at 213-233 (LVLGVLVGCFIVTGVAVGIFL) threads the bilayer. The Cytoplasmic segment spans residues 234-241 (CTGGRRRC).

Expressed in endothelial cells.

Its subcellular location is the membrane. Its function is as follows. Binds activated protein C. Enhances protein C activation by the thrombin-thrombomodulin complex; plays a role in the protein C pathway controlling blood coagulation. The chain is Endothelial protein C receptor (PROCR) from Bos taurus (Bovine).